A 599-amino-acid polypeptide reads, in one-letter code: Mediator of RNA polymerase II transcription subunit 26 (599 aa).

In terms of domain architecture, TFIIS N-terminal spans 10 to 87 (QIRDRLLQAI…RSWQKLIEPV (78 aa)). Disordered regions lie at residues 98–331 (AGAP…RLEL), 352–403 (AGLG…RDYT), and 427–470 (FDPM…LQSP). Over residues 123 to 133 (SVHDLKYRNDM) the composition is skewed to basic and acidic residues. Residues 174–191 (VPNSSPLPTNGISGSPES) are compositionally biased toward polar residues. Over residues 207-218 (NRLEHGENDKHS) the composition is skewed to basic and acidic residues. The segment covering 314–324 (SPLPLAQPSTP) has biased composition (pro residues). Basic and acidic residues predominate over residues 441–463 (EPVRADSPVHTEQPRTELDKPEA). Phosphoserine is present on residues serine 447 and serine 469.

It belongs to the Mediator complex subunit 26 family. In terms of assembly, component of the Mediator complex, which is composed of MED1, MED4, MED6, MED7, MED8, MED9, MED10, MED11, MED12, MED13, MED13L, MED14, MED15, MED16, MED17, MED18, MED19, MED20, MED21, MED22, MED23, MED24, MED25, MED26, MED27, MED29, MED30, MED31, CCNC, CDK8 and CDC2L6/CDK11. The MED12, MED13, CCNC and CDK8 subunits form a distinct module termed the CDK8 module. Mediator containing the CDK8 module is less active than Mediator lacking this module in supporting transcriptional activation. Individual preparations of the Mediator complex lacking one or more distinct subunits have been variously termed ARC, CRSP, DRIP, PC2, SMCC and TRAP. Interacts with CEBPB (when not methylated).

It is found in the nucleus. Component of the Mediator complex, a coactivator involved in the regulated transcription of nearly all RNA polymerase II-dependent genes. Mediator functions as a bridge to convey information from gene-specific regulatory proteins to the basal RNA polymerase II transcription machinery. Mediator is recruited to promoters by direct interactions with regulatory proteins and serves as a scaffold for the assembly of a functional pre-initiation complex with RNA polymerase II and the general transcription factors. This chain is Mediator of RNA polymerase II transcription subunit 26 (MED26), found in Bos taurus (Bovine).